A 407-amino-acid polypeptide reads, in one-letter code: Tryptophan synthase beta chain (407 aa).

At K91 the chain carries N6-(pyridoxal phosphate)lysine.

This sequence belongs to the TrpB family. As to quaternary structure, tetramer of two alpha and two beta chains. It depends on pyridoxal 5'-phosphate as a cofactor.

The enzyme catalyses (1S,2R)-1-C-(indol-3-yl)glycerol 3-phosphate + L-serine = D-glyceraldehyde 3-phosphate + L-tryptophan + H2O. Its pathway is amino-acid biosynthesis; L-tryptophan biosynthesis; L-tryptophan from chorismate: step 5/5. Functionally, the beta subunit is responsible for the synthesis of L-tryptophan from indole and L-serine. The polypeptide is Tryptophan synthase beta chain (Streptococcus pneumoniae serotype 2 (strain D39 / NCTC 7466)).